A 107-amino-acid polypeptide reads, in one-letter code: Prepilin peptidase-dependent protein C (107 aa).

Residues 1–10 (MSASLKNQQG) constitute a propeptide that is removed on maturation. N-methylphenylalanine is present on Phe-11. Residues 11 to 30 (FSLPEVMLAMVLMVMIVTAL) traverse the membrane as a helical segment.

It is found in the membrane. In terms of biological role, not yet known. The protein is Prepilin peptidase-dependent protein C (ppdC) of Escherichia coli (strain K12).